The sequence spans 367 residues: Peroxisome biogenesis protein 16 (367 aa).

Residues 135-173 form a disordered region; the sequence is GGETPNEEKDSNQSESQNRAGNSGRNLGPHGLGNQNHHN. A compositionally biased stretch (polar residues) spans 147 to 159; it reads QSESQNRAGNSGR. 2 helical membrane-spanning segments follow: residues 237–257 and 264–284; these read ALFA…VLFI and SWIP…LLAN.

It belongs to the peroxin-16 family. In terms of assembly, interacts with APEM9 (via both N- and C-terminus). In terms of processing, the detection of an additional immunorelated polypeptide of 52 kDa suggests a post-translational modification of PEX16. Expressed in roots, siliques, seeds, cotyledons, leaves and flowers. Low expression in leaves and roots.

It is found in the peroxisome membrane. It localises to the endoplasmic reticulum membrane. Functionally, involved in the formation of peroxisomes, lipid bodies and protein bodies. This is Peroxisome biogenesis protein 16 from Arabidopsis thaliana (Mouse-ear cress).